A 243-amino-acid polypeptide reads, in one-letter code: BTB/POZ domain-containing protein At4g08455 (243 aa).

A coiled-coil region spans residues 19 to 51; the sequence is KECYVEAGETEEELKREIDDLKAKVAFLRLSSS. A BTB domain is found at 64–136; the sequence is TDVVLIASED…LYTAEACLDE (73 aa).

In terms of assembly, interacts with CUL3A and CUL3B.

It participates in protein modification; protein ubiquitination. May act as a substrate-specific adapter of an E3 ubiquitin-protein ligase complex (CUL3-RBX1-BTB) which mediates the ubiquitination and subsequent proteasomal degradation of target proteins. The sequence is that of BTB/POZ domain-containing protein At4g08455 from Arabidopsis thaliana (Mouse-ear cress).